The primary structure comprises 123 residues: Methanesulfonate monooxygenase ferredoxin subunit (123 aa).

In terms of domain architecture, Rieske spans 4–99 (TYLCDAADVA…LKEEDGKLLA (96 aa)). [2Fe-2S] cluster is bound by residues Cys-43, His-45, Cys-63, and His-66.

The protein belongs to the bacterial ring-hydroxylating dioxygenase ferredoxin component family. As to quaternary structure, the MSA monooxygenase system consists of 4 proteins: the 2 subunits of the hydroxylase component (MsmA and MsmB), a ferredoxin (MsmC) and a ferredoxin reductase (MsmD). The ferredoxin component is dimeric. [2Fe-2S] cluster serves as cofactor.

The protein localises to the cytoplasm. It catalyses the reaction methanesulfonate + NADH + O2 = sulfite + formaldehyde + NAD(+) + H2O. Its activity is regulated as follows. MSAMO is inhibited by metal chelators (such as bathophenanthroline, bathocuprione, neocuprione, alpha-alpha-dipyridil and sodium EDTA) and by sodium azide, sodium arsenate and potassium cyanide. In terms of biological role, methanesulfonate monooxygenase (MSAMO) mediates the primary degradation of methanesulfonic acid (MSA) to produce formaldehyd and inorganic sulfite by initial hydroxylation of the carbon atom prior to spontaneous cleavage of the unstable hydroxymethanesulfonic acid. MSAMO has a restricted substrate range that includes only the short-chain aliphatic sulfonates (methane- to butanesulfonate) and excludes all larger molecules, such as arylsulfonates and aromatic sulfonates. All MSAMO components are required for enzyme activity. The protein is Methanesulfonate monooxygenase ferredoxin subunit of Methylosulfonomonas methylovora.